Here is a 584-residue protein sequence, read N- to C-terminus: MRRFGSKFASGLASRCALACPLASAATAPAGASTTSSTSSAQKSFFKTTEMIGYVHSIDGTIATLIPAPGNPGVAYNTIIQIQVSPTTFAAGLVFNLEKDGRIGIILMDNITEVQSGQKVMATGQLLHIPVGAGVLGKVVNPLGHEVPVGLVTRSRRLLDSTLGKVDTGAPNIVSRSPVNYNLLTGFKAVDTMIPIGRGQRELIVGDRQTGKTSIAVSTIINQVRINQQILSKNAVISIYVSIGQRCSNVARIHRLLQSYGALRYTTVMAATAAEPAGLQYLAPYAGVTMGEYFMNRGRHCLCVYDDLSKQAVAYRQISLLLRRPPGREAYPGDVFYLHSRLLERAAMLSPGKGGGSVTALPIVETLSNDVTAYIVTNVISITDGQIYLDTKLFTGGQRPAVNIGLSVSRVGSSAQNAAMKGVAGKLKGILAEYRKLAADSVGGQQVQTIPMIRGARFVALFNQKQPSYFMNAIVSLYACLNGYLDDVKVQYVKFYEYLLVHRDLGIMYGTAKNKFFYMYVQELNYLIRFFTLNSPILHGELEEMLKQHTHLFLQHYQSKMNAIKSEKDVKALKNLLYSCKRAV.

The transit peptide at 1–24 (MRRFGSKFASGLASRCALACPLAS) directs the protein to the mitochondrion. ATP contacts are provided by residues 207–214 (DRQTGKTS) and Gln-464.

The protein belongs to the ATPase alpha/beta chains family. In terms of assembly, F-type ATPases have 2 components, F(1) - the catalytic core - and F(o) - the membrane proton channel. F(1) has five subunits: alpha(3), beta(3), gamma(1), delta(1), epsilon(1), plus the additional subunit P18 (Tb427.05.1710) that is not present in F(1)F(o) ATP synthase from metazoa. Subunit P18 (Tb927.5.1710) interacts with the alpha subunit with a 1:1 stoichiometry; the interaction is direct. Subunit gamma is part of the central stalk. F(o) has three main subunits: a, b and c. The trypanosomal ATPase complex contains additional subunits that are not present in the F(1)F(o) ATP synthase from metazoa.

It is found in the mitochondrion. It localises to the mitochondrion inner membrane. In terms of biological role, mitochondrial membrane ATP synthase (F(1)F(o) ATP synthase) produces ATP from ADP in the presence of a proton gradient across the membrane which is generated by electron transport complexes of the respiratory chain. F-type ATPases consist of two structural domains, F(1) - containing the extramembraneous catalytic core, and F(o) - containing the membrane proton channel, linked together by a central stalk and a peripheral stalk. During catalysis, ATP synthesis in the catalytic domain of F(1) is coupled via a rotary mechanism of the central stalk subunits to proton translocation. Subunits alpha and beta form the catalytic core in F(1). Rotation of the central stalk against the surrounding alpha(3)beta(3) subunits leads to hydrolysis of ATP in three separate catalytic sites on the beta subunits. Subunit alpha does not bear the catalytic high-affinity ATP-binding sites. Contrary to the procyclic, insect form that requires F(1)F(o) ATP synthase for ATP synthesis, the bloodstream form relies on ATP hydrolysis by F(1)F(o) ATP synthase to maintain its mitochondrial membrane potential. This Trypanosoma brucei brucei protein is ATP synthase subunit alpha, mitochondrial.